Consider the following 253-residue polypeptide: Pimeloyl-[acyl-carrier protein] methyl ester esterase (253 aa).

Substrate-binding positions include W18, 78–79, and 139–143; these read SL and FLALD. S78 (nucleophile) is an active-site residue. Catalysis depends on residues D203 and H231. H231 lines the substrate pocket.

It belongs to the AB hydrolase superfamily. Carboxylesterase BioH family. Monomer.

The protein localises to the cytoplasm. The catalysed reaction is 6-carboxyhexanoyl-[ACP] methyl ester + H2O = 6-carboxyhexanoyl-[ACP] + methanol + H(+). It participates in cofactor biosynthesis; biotin biosynthesis. The physiological role of BioH is to remove the methyl group introduced by BioC when the pimeloyl moiety is complete. It allows to synthesize pimeloyl-ACP via the fatty acid synthetic pathway through the hydrolysis of the ester bonds of pimeloyl-ACP esters. This is Pimeloyl-[acyl-carrier protein] methyl ester esterase from Xanthomonas axonopodis pv. citri (strain 306).